A 146-amino-acid chain; its full sequence is Large ribosomal subunit protein uL13 (146 aa).

It belongs to the universal ribosomal protein uL13 family. As to quaternary structure, part of the 50S ribosomal subunit.

Functionally, this protein is one of the early assembly proteins of the 50S ribosomal subunit, although it is not seen to bind rRNA by itself. It is important during the early stages of 50S assembly. This is Large ribosomal subunit protein uL13 from Sulfurisphaera tokodaii (strain DSM 16993 / JCM 10545 / NBRC 100140 / 7) (Sulfolobus tokodaii).